The following is a 382-amino-acid chain: Dual-specificity RNA methyltransferase RlmN (382 aa).

Glutamate 91 (proton acceptor) is an active-site residue. The region spanning 97 to 339 (EEDRGTLCIS…TTIRKTRGDD (243 aa)) is the Radical SAM core domain. Cysteine 104 and cysteine 344 are joined by a disulfide. Positions 111, 115, and 118 each coordinate [4Fe-4S] cluster. S-adenosyl-L-methionine-binding positions include 165 to 166 (GE), serine 197, 219 to 221 (SLH), and asparagine 301. Catalysis depends on cysteine 344, which acts as the S-methylcysteine intermediate.

This sequence belongs to the radical SAM superfamily. RlmN family. It depends on [4Fe-4S] cluster as a cofactor.

It is found in the cytoplasm. It catalyses the reaction adenosine(2503) in 23S rRNA + 2 reduced [2Fe-2S]-[ferredoxin] + 2 S-adenosyl-L-methionine = 2-methyladenosine(2503) in 23S rRNA + 5'-deoxyadenosine + L-methionine + 2 oxidized [2Fe-2S]-[ferredoxin] + S-adenosyl-L-homocysteine. The enzyme catalyses adenosine(37) in tRNA + 2 reduced [2Fe-2S]-[ferredoxin] + 2 S-adenosyl-L-methionine = 2-methyladenosine(37) in tRNA + 5'-deoxyadenosine + L-methionine + 2 oxidized [2Fe-2S]-[ferredoxin] + S-adenosyl-L-homocysteine. In terms of biological role, specifically methylates position 2 of adenine 2503 in 23S rRNA and position 2 of adenine 37 in tRNAs. m2A2503 modification seems to play a crucial role in the proofreading step occurring at the peptidyl transferase center and thus would serve to optimize ribosomal fidelity. The chain is Dual-specificity RNA methyltransferase RlmN from Albidiferax ferrireducens (strain ATCC BAA-621 / DSM 15236 / T118) (Rhodoferax ferrireducens).